The following is a 468-amino-acid chain: MKDVRLPTLFEIIIVLGVFLALVLSFTVFLDLPIQLALFVSWFIAMLLGIRLGYSYKDLQNAIVHGISNGLEAVLILVSVGALIGTWIAGGVVPTLIYYGLEFIHPSIFLLATLIICSIMSVATGTSWGTVGTAGIAMIAIGEGLGIPLPLVAGAILSGAYFGDKLSPLSDSTVLASSLSKVDVLAHVRAMLYLSIPAYVITAILFTVVGFMYGGKNIDLDKVEFLKSSLQNTFDIHIWMLIPAVLVIVLLAMKKPSMPVIVIGALLGAIWAVVFQGMDIAHAIATAYNGFSIKTDVEFLNGLLNRGGIVGMLDSLVVIIFGLGFGGLLEKLGVLKVIVSTFEKKLTSAGNVTLSTLIVAFLANIFGCAMYVSLILTPKIMEDSYDRLHLDRRVLSRNSEVGGTLTSGMVPWSDNGIYMAGILGVSTFSYLPFMWLSFVAIGLAIIYGYTGKFIWYTKNNTVKAEKLG.

12 helical membrane-spanning segments follow: residues 9 to 29, 30 to 50, 73 to 93, 96 to 116, 136 to 156, 192 to 212, 233 to 253, 258 to 278, 309 to 329, 357 to 377, 405 to 425, and 428 to 448; these read LFEI…FTVF, LDLP…LLGI, AVLI…GGVV, LIYY…TLII, IAMI…AGAI, LYLS…VGFM, TFDI…LLAM, MPVI…FQGM, IVGM…GGLL, LIVA…LILT, LTSG…ILGV, and FSYL…IIYG.

It belongs to the NhaC Na(+)/H(+) (TC 2.A.35) antiporter family.

It localises to the cell membrane. In terms of biological role, couples proton uptake and Na(+) efflux to the substrate-product malate/lactate antiport, in an electroneutral malate-2H(+)/Na(+)-lactate exchange. Plays a role in supporting growth to high density on malate at reduced protonmotive force. This chain is Malate-2H(+)/Na(+)-lactate antiporter (mleN), found in Bacillus subtilis (strain 168).